Reading from the N-terminus, the 212-residue chain is Probable GTP-binding protein EngB (212 aa).

Positions 22–212 constitute an EngB-type G domain; sequence GVSEFAFFGR…NILSLIAKRI (191 aa). Residues 30–37, 57–61, 95–98, 162–165, and 192–195 contribute to the GTP site; these read GRSNAGKS, GMTRE, DLPG, TKAD, and ISSA. Mg(2+) is bound by residues Ser-37 and Thr-59.

It belongs to the TRAFAC class TrmE-Era-EngA-EngB-Septin-like GTPase superfamily. EngB GTPase family. The cofactor is Mg(2+).

Functionally, necessary for normal cell division and for the maintenance of normal septation. The chain is Probable GTP-binding protein EngB from Treponema denticola (strain ATCC 35405 / DSM 14222 / CIP 103919 / JCM 8153 / KCTC 15104).